We begin with the raw amino-acid sequence, 39 residues long: Cytochrome b559 subunit beta (39 aa).

The chain crosses the membrane as a helical span at residues 14-30 (WLAVHGLAVPTVFFLGS). His-18 contributes to the heme binding site.

Belongs to the PsbE/PsbF family. In terms of assembly, heterodimer of an alpha subunit and a beta subunit. PSII is composed of 1 copy each of membrane proteins PsbA, PsbB, PsbC, PsbD, PsbE, PsbF, PsbH, PsbI, PsbJ, PsbK, PsbL, PsbM, PsbT, PsbX, PsbY, PsbZ, Psb30/Ycf12, at least 3 peripheral proteins of the oxygen-evolving complex and a large number of cofactors. It forms dimeric complexes. It depends on heme b as a cofactor.

It is found in the plastid. It localises to the chloroplast thylakoid membrane. In terms of biological role, this b-type cytochrome is tightly associated with the reaction center of photosystem II (PSII). PSII is a light-driven water:plastoquinone oxidoreductase that uses light energy to abstract electrons from H(2)O, generating O(2) and a proton gradient subsequently used for ATP formation. It consists of a core antenna complex that captures photons, and an electron transfer chain that converts photonic excitation into a charge separation. This is Cytochrome b559 subunit beta from Gnetum gnemon (Spanish joint-fir).